A 65-amino-acid polypeptide reads, in one-letter code: Toxin Cbi1 (65 aa).

An LCN-type CS-alpha/beta domain is found at Lys-1 to Arg-64. 4 disulfide bridges follow: Cys-11–Cys-63, Cys-15–Cys-37, Cys-22–Cys-44, and Cys-26–Cys-46.

It belongs to the long (4 C-C) scorpion toxin superfamily. Sodium channel inhibitor family. Beta subfamily. In terms of tissue distribution, expressed by the venom gland.

It localises to the secreted. Beta toxins bind voltage-independently at site-4 of sodium channels (Nav) and shift the voltage of activation toward more negative potentials thereby affecting sodium channel activation and promoting spontaneous and repetitive firing. The chain is Toxin Cbi1 from Centruroides bicolor (Scorpion).